A 520-amino-acid polypeptide reads, in one-letter code: GMP synthase [glutamine-hydrolyzing] (520 aa).

The Glutamine amidotransferase type-1 domain occupies 9 to 202 (SVLIVDFGSQ…IHNVAGIKGD (194 aa)). The Nucleophile role is filled by C86. Residues H176 and E178 contribute to the active site. Residues 203–395 (WSMSAYRQKA…LGLPDSFIGR (193 aa)) form the GMPS ATP-PPase domain. 230-236 (SGGVDSS) serves as a coordination point for ATP.

In terms of assembly, homodimer.

The enzyme catalyses XMP + L-glutamine + ATP + H2O = GMP + L-glutamate + AMP + diphosphate + 2 H(+). Its pathway is purine metabolism; GMP biosynthesis; GMP from XMP (L-Gln route): step 1/1. Catalyzes the synthesis of GMP from XMP. The sequence is that of GMP synthase [glutamine-hydrolyzing] from Rhizobium etli (strain ATCC 51251 / DSM 11541 / JCM 21823 / NBRC 15573 / CFN 42).